The primary structure comprises 405 residues: MSTSFMKSPRLFFTSESVTEGHPDKICDQVSDAVLDAFLSHDPRARVACETATTTGLIVVIGEVTYEQGYIPIEEIVRKTIKDIGYTDAAYGFDADTCGVMVAIHGQSPDIAQGVNRALEVRSDGQVTEEEVATIGAGDQGMMFGFACNETPELMPLPIALAHRIGRRLSRLRKDGVLPYLRPDGKSQVTIEYSYGRPVRVDTVLVSNQHAPDVTQEQIRHDIIHHVIHEVIPNDLLDEKTKYFVNPTGRFVIGGPMGDSGLTGRKIIVDTYGGMARHGGGAFSGKDPTKVDRSAAYACRWVAKNVVAAGLADRFEIQVSYAIGVARPLSISVECFGTNKVPEETIVRLIDEHFDLRPGAIIRDLRLRRPIYRPTAAYGHFGRDDIDAPWEQTDRAEALRRAAGL.

His-22 lines the ATP pocket. Asp-24 lines the Mg(2+) pocket. Glu-50 provides a ligand contact to K(+). Glu-63 and Gln-107 together coordinate L-methionine. The segment at 107–117 (QSPDIAQGVNR) is flexible loop. ATP-binding positions include 184–186 (DGK), 250–251 (RF), Asp-259, 265–266 (RK), Ala-282, and Lys-286. Position 259 (Asp-259) interacts with L-methionine. Lys-290 serves as a coordination point for L-methionine.

This sequence belongs to the AdoMet synthase family. Homotetramer; dimer of dimers. It depends on Mg(2+) as a cofactor. Requires K(+) as cofactor.

It is found in the cytoplasm. It catalyses the reaction L-methionine + ATP + H2O = S-adenosyl-L-methionine + phosphate + diphosphate. Its pathway is amino-acid biosynthesis; S-adenosyl-L-methionine biosynthesis; S-adenosyl-L-methionine from L-methionine: step 1/1. Its function is as follows. Catalyzes the formation of S-adenosylmethionine (AdoMet) from methionine and ATP. The overall synthetic reaction is composed of two sequential steps, AdoMet formation and the subsequent tripolyphosphate hydrolysis which occurs prior to release of AdoMet from the enzyme. The chain is S-adenosylmethionine synthase from Roseiflexus castenholzii (strain DSM 13941 / HLO8).